A 167-amino-acid chain; its full sequence is Urease accessory protein UreE (167 aa).

Belongs to the UreE family.

Its subcellular location is the cytoplasm. In terms of biological role, involved in urease metallocenter assembly. Binds nickel. Probably functions as a nickel donor during metallocenter assembly. This Pseudomonas paraeruginosa (strain DSM 24068 / PA7) (Pseudomonas aeruginosa (strain PA7)) protein is Urease accessory protein UreE.